We begin with the raw amino-acid sequence, 1653 residues long: Alpha-2-macroglobulin (1653 aa).

An N-terminal signal peptide occupies residues 1–17 (MKKLRVAACMLMLALAG). A lipid anchor (N-palmitoyl cysteine) is attached at Cys-18. Cys-18 is lipidated: S-diacylglycerol cysteine. A cross-link (isoglutamyl cysteine thioester (Cys-Gln)) is located at residues 1187-1190 (CLEQ). The stretch at 1559-1589 (NQNLANGSASLEQSGGEVQNLLNQMQQASIK) forms a coiled coil.

The protein belongs to the protease inhibitor I39 (alpha-2-macroglobulin) family. Bacterial alpha-2-macroglobulin subfamily. May form homooligomers.

Its subcellular location is the cell inner membrane. In terms of biological role, protects the bacterial cell from host peptidases. Acts by a 'trapping' mechanism. Cleavage of the bait-region domain by host peptidases leads to a global conformational change, which results in entrapment of the host peptidase and activation of the thioester bond that covalently binds the attacking host peptidase. Trapped peptidases are still active except against very large substrates. May protect the entire periplam, including the lipoproteins anchored to the periplasmic side of the outer membrane, against intruding endopeptidases. In Escherichia coli (strain K12), this protein is Alpha-2-macroglobulin (yfhM).